Reading from the N-terminus, the 279-residue chain is Urease accessory protein UreD (279 aa).

It belongs to the UreD family. UreD, UreF and UreG form a complex that acts as a GTP-hydrolysis-dependent molecular chaperone, activating the urease apoprotein by helping to assemble the nickel containing metallocenter of UreC. The UreE protein probably delivers the nickel.

It localises to the cytoplasm. Required for maturation of urease via the functional incorporation of the urease nickel metallocenter. The polypeptide is Urease accessory protein UreD (Nitrosospira multiformis (strain ATCC 25196 / NCIMB 11849 / C 71)).